The chain runs to 717 residues: Polyribonucleotide nucleotidyltransferase (717 aa).

Mg(2+) contacts are provided by Asp488 and Asp494. Positions 555–614 (PRIEVMNIPVDKIREVIGSGGKVIREIVEKTGAKINIDDDGTVKIASASAKEIEAARKWI) constitute a KH domain. Residues 624–692 (GQVYEGTVVK…ERGKVRLSMK (69 aa)) enclose the S1 motif domain.

It belongs to the polyribonucleotide nucleotidyltransferase family. Mg(2+) serves as cofactor.

The protein localises to the cytoplasm. The catalysed reaction is RNA(n+1) + phosphate = RNA(n) + a ribonucleoside 5'-diphosphate. Functionally, involved in mRNA degradation. Catalyzes the phosphorolysis of single-stranded polyribonucleotides processively in the 3'- to 5'-direction. The sequence is that of Polyribonucleotide nucleotidyltransferase from Rhizobium meliloti (strain 1021) (Ensifer meliloti).